The chain runs to 330 residues: Phosphate acyltransferase (330 aa).

This sequence belongs to the PlsX family. Homodimer. Probably interacts with PlsY.

The protein resides in the cytoplasm. It carries out the reaction a fatty acyl-[ACP] + phosphate = an acyl phosphate + holo-[ACP]. It functions in the pathway lipid metabolism; phospholipid metabolism. Functionally, catalyzes the reversible formation of acyl-phosphate (acyl-PO(4)) from acyl-[acyl-carrier-protein] (acyl-ACP). This enzyme utilizes acyl-ACP as fatty acyl donor, but not acyl-CoA. In Bacillus thuringiensis (strain Al Hakam), this protein is Phosphate acyltransferase.